The sequence spans 650 residues: Putative lipase atg15 (650 aa).

Topologically, residues 1-11 (MKSSRKRTKRR) are cytoplasmic. Residues 12-32 (VLQDMSISGLLLSVALLPSVV) traverse the membrane as a helical; Signal-anchor for type II membrane protein segment. Over 33–650 (SAQDHVYLDP…CVGSTGTELR (618 aa)) the chain is Lumenal. 5 N-linked (GlcNAc...) asparagine glycosylation sites follow: N165, N200, N222, N280, and N304. The active-site Charge relay system is S320. The N-linked (GlcNAc...) asparagine glycan is linked to N466.

This sequence belongs to the AB hydrolase superfamily. Lipase family. In terms of assembly, binds to both phosphatidylinositol (PI) and phosphatidylinositol 3,5-bisphosphate (PIP2).

It is found in the endosome. It localises to the multivesicular body membrane. Its subcellular location is the prevacuolar compartment membrane. The catalysed reaction is a triacylglycerol + H2O = a diacylglycerol + a fatty acid + H(+). Functionally, lipase which is essential for lysis of subvacuolar cytoplasm to vacuole targeted bodies and intravacuolar autophagic bodies. Involved in the lysis of intravacuolar multivesicular body (MVB) vesicles. The intravacuolar membrane disintegration by atg15 is critical to life span extension. The protein is Putative lipase atg15 (atg15) of Aspergillus fumigatus (strain ATCC MYA-4609 / CBS 101355 / FGSC A1100 / Af293) (Neosartorya fumigata).